The chain runs to 208 residues: Uracil phosphoribosyltransferase (208 aa).

5-phospho-alpha-D-ribose 1-diphosphate contacts are provided by residues Arg-78, Arg-103, and 130–138 (DPMLATGGS). Uracil contacts are provided by residues Ile-193 and 198 to 200 (GDA). Asp-199 contributes to the 5-phospho-alpha-D-ribose 1-diphosphate binding site.

It belongs to the UPRTase family. Mg(2+) is required as a cofactor.

It carries out the reaction UMP + diphosphate = 5-phospho-alpha-D-ribose 1-diphosphate + uracil. Its pathway is pyrimidine metabolism; UMP biosynthesis via salvage pathway; UMP from uracil: step 1/1. Its activity is regulated as follows. Allosterically activated by GTP. Its function is as follows. Catalyzes the conversion of uracil and 5-phospho-alpha-D-ribose 1-diphosphate (PRPP) to UMP and diphosphate. This Pectobacterium atrosepticum (strain SCRI 1043 / ATCC BAA-672) (Erwinia carotovora subsp. atroseptica) protein is Uracil phosphoribosyltransferase.